The chain runs to 354 residues: Holliday junction branch migration complex subunit RuvB (354 aa).

Residues 4-198 (TTDYGASNTG…FGFTAHLDFY (195 aa)) are large ATPase domain (RuvB-L). ATP contacts are provided by residues Leu-37, Arg-38, Gly-79, Lys-82, Thr-83, Thr-84, 145–147 (EDF), Arg-188, Tyr-198, and Arg-235. Position 83 (Thr-83) interacts with Mg(2+). The interval 199 to 269 (PHEELEKLIE…DVKEALALYQ (71 aa)) is small ATPAse domain (RuvB-S). Residues 272–354 (SEGLDRLDIA…TPKDDVSKLF (83 aa)) form a head domain (RuvB-H) region. Arg-327 and Arg-332 together coordinate DNA.

The protein belongs to the RuvB family. As to quaternary structure, homohexamer. Forms an RuvA(8)-RuvB(12)-Holliday junction (HJ) complex. HJ DNA is sandwiched between 2 RuvA tetramers; dsDNA enters through RuvA and exits via RuvB. An RuvB hexamer assembles on each DNA strand where it exits the tetramer. Each RuvB hexamer is contacted by two RuvA subunits (via domain III) on 2 adjacent RuvB subunits; this complex drives branch migration. In the full resolvosome a probable DNA-RuvA(4)-RuvB(12)-RuvC(2) complex forms which resolves the HJ.

Its subcellular location is the cytoplasm. The catalysed reaction is ATP + H2O = ADP + phosphate + H(+). Functionally, the RuvA-RuvB-RuvC complex processes Holliday junction (HJ) DNA during genetic recombination and DNA repair, while the RuvA-RuvB complex plays an important role in the rescue of blocked DNA replication forks via replication fork reversal (RFR). RuvA specifically binds to HJ cruciform DNA, conferring on it an open structure. The RuvB hexamer acts as an ATP-dependent pump, pulling dsDNA into and through the RuvAB complex. RuvB forms 2 homohexamers on either side of HJ DNA bound by 1 or 2 RuvA tetramers; 4 subunits per hexamer contact DNA at a time. Coordinated motions by a converter formed by DNA-disengaged RuvB subunits stimulates ATP hydrolysis and nucleotide exchange. Immobilization of the converter enables RuvB to convert the ATP-contained energy into a lever motion, pulling 2 nucleotides of DNA out of the RuvA tetramer per ATP hydrolyzed, thus driving DNA branch migration. The RuvB motors rotate together with the DNA substrate, which together with the progressing nucleotide cycle form the mechanistic basis for DNA recombination by continuous HJ branch migration. Branch migration allows RuvC to scan DNA until it finds its consensus sequence, where it cleaves and resolves cruciform DNA. The polypeptide is Holliday junction branch migration complex subunit RuvB (Bifidobacterium longum (strain NCC 2705)).